Consider the following 345-residue polypeptide: Phosphate acyltransferase (345 aa).

Belongs to the PlsX family. In terms of assembly, homodimer. Probably interacts with PlsY.

Its subcellular location is the cytoplasm. The enzyme catalyses a fatty acyl-[ACP] + phosphate = an acyl phosphate + holo-[ACP]. It functions in the pathway lipid metabolism; phospholipid metabolism. Functionally, catalyzes the reversible formation of acyl-phosphate (acyl-PO(4)) from acyl-[acyl-carrier-protein] (acyl-ACP). This enzyme utilizes acyl-ACP as fatty acyl donor, but not acyl-CoA. The sequence is that of Phosphate acyltransferase from Trichlorobacter lovleyi (strain ATCC BAA-1151 / DSM 17278 / SZ) (Geobacter lovleyi).